The sequence spans 123 residues: DNA-directed RNA polymerase I subunit RPA12 (123 aa).

The Zn(2+) site is built by C17, C20, C35, C38, C84, and C87. The C4-type zinc-finger motif lies at 17–38; it reads CPDCGSVLPLPGIQDTVICSRC. The TFIIS-type zinc-finger motif lies at 80–120; sequence IDRRCPRCGHEGMAYHTRQMRSADEGQTVFYTCINCKFQEK. Positions 103 to 104 match the Hairpin motif; it reads DE. Residues C112 and C115 each coordinate Zn(2+).

Belongs to the archaeal RpoM/eukaryotic RPA12/RPB9/RPC11 RNA polymerase family. As to quaternary structure, component of the RNA polymerase I (Pol I) complex consisting of 13 subunits: a ten-subunit catalytic core composed of POLR1A/RPA1, POLR1B/RPA2, POLR1C/RPAC1, POLR1D/RPAC2, POLR1H/RPA12, POLR2E/RPABC1, POLR2F/RPABC2, POLR2H/RPABC3, POLR2K/RPABC4 and POLR2L/RPABC5; a mobile stalk subunit POLR1F/RPA43 protruding from the core and additional subunits homologous to general transcription factors POLR1E/RPA49 and POLR1G/RPA34. Part of Pol I pre-initiation complex (PIC), in which Pol I core assembles with RRN3 and promoter-bound UTBF and SL1/TIF-IB complex.

It localises to the nucleus. The protein localises to the nucleolus. Core component of RNA polymerase I (Pol I), a DNA-dependent RNA polymerase which synthesizes ribosomal RNA precursors using the four ribonucleoside triphosphates as substrates. Can mediate Pol I proofreading of the nascent RNA transcript. Anchors into the Pol I active site to monitor transcription fidelity and cleave mis-incorporated 5'-ribonucleotides. This chain is DNA-directed RNA polymerase I subunit RPA12, found in Mus musculus (Mouse).